Reading from the N-terminus, the 170-residue chain is Protein GrpE (170 aa).

Residues 1 to 29 (MSEEIKNEEIVEEVEATEEVVETPEKSEL) are disordered. A compositionally biased stretch (acidic residues) spans 10-22 (IVEEVEATEEVVE).

The protein belongs to the GrpE family. In terms of assembly, homodimer.

The protein localises to the cytoplasm. Its function is as follows. Participates actively in the response to hyperosmotic and heat shock by preventing the aggregation of stress-denatured proteins, in association with DnaK and GrpE. It is the nucleotide exchange factor for DnaK and may function as a thermosensor. Unfolded proteins bind initially to DnaJ; upon interaction with the DnaJ-bound protein, DnaK hydrolyzes its bound ATP, resulting in the formation of a stable complex. GrpE releases ADP from DnaK; ATP binding to DnaK triggers the release of the substrate protein, thus completing the reaction cycle. Several rounds of ATP-dependent interactions between DnaJ, DnaK and GrpE are required for fully efficient folding. The chain is Protein GrpE from Streptococcus suis (strain 98HAH33).